The primary structure comprises 618 residues: 1-deoxy-D-xylulose-5-phosphate synthase (618 aa).

Residues histidine 72 and 113 to 115 contribute to the thiamine diphosphate site; that span reads GHA. Aspartate 144 serves as a coordination point for Mg(2+). Residues 145–146, asparagine 173, histidine 284, and glutamate 359 contribute to the thiamine diphosphate site; that span reads GA. Asparagine 173 is a Mg(2+) binding site.

Belongs to the transketolase family. DXPS subfamily. In terms of assembly, homodimer. Mg(2+) is required as a cofactor. It depends on thiamine diphosphate as a cofactor.

The catalysed reaction is D-glyceraldehyde 3-phosphate + pyruvate + H(+) = 1-deoxy-D-xylulose 5-phosphate + CO2. It functions in the pathway metabolic intermediate biosynthesis; 1-deoxy-D-xylulose 5-phosphate biosynthesis; 1-deoxy-D-xylulose 5-phosphate from D-glyceraldehyde 3-phosphate and pyruvate: step 1/1. Its function is as follows. Catalyzes the acyloin condensation reaction between C atoms 2 and 3 of pyruvate and glyceraldehyde 3-phosphate to yield 1-deoxy-D-xylulose-5-phosphate (DXP). This is 1-deoxy-D-xylulose-5-phosphate synthase from Dictyoglomus turgidum (strain DSM 6724 / Z-1310).